We begin with the raw amino-acid sequence, 118 residues long: UPF0449 protein C19orf25 homolog (118 aa).

The residue at position 63 (Tyr-63) is a Phosphotyrosine. The stretch at 69 to 105 (YVAMNQRLQQAGAQLEQKRADLQQAGEELERDISQVG) forms a coiled coil.

It belongs to the UPF0449 family.

In Bos taurus (Bovine), this protein is UPF0449 protein C19orf25 homolog.